Here is a 295-residue protein sequence, read N- to C-terminus: Sulfotransferase 1A1 (295 aa).

48–53 (KSGTTW) serves as a coordination point for 3'-phosphoadenylyl sulfate. 106–108 (KTH) serves as a coordination point for substrate. H108 functions as the Proton acceptor in the catalytic mechanism. Residues R130, S138, Y193, 227 to 232 (TSFKEM), and 255 to 259 (FMRKG) each bind 3'-phosphoadenylyl sulfate. A Phosphoserine modification is found at S138.

This sequence belongs to the sulfotransferase 1 family. In terms of assembly, homodimer.

The protein resides in the cytoplasm. The catalysed reaction is a phenol + 3'-phosphoadenylyl sulfate = an aryl sulfate + adenosine 3',5'-bisphosphate + H(+). The enzyme catalyses 17beta-estradiol + 3'-phosphoadenylyl sulfate = 17beta-estradiol 3-sulfate + adenosine 3',5'-bisphosphate + H(+). It carries out the reaction 4-ethylphenol + 3'-phosphoadenylyl sulfate = 4-ethylphenyl sulfate + adenosine 3',5'-bisphosphate + H(+). It catalyses the reaction 4-nitrophenol + 3'-phosphoadenylyl sulfate = 4-nitrophenyl sulfate + adenosine 3',5'-bisphosphate. The catalysed reaction is dopamine + 3'-phosphoadenylyl sulfate = dopamine 3-O-sulfate + adenosine 3',5'-bisphosphate + H(+). The enzyme catalyses dopamine + 3'-phosphoadenylyl sulfate = dopamine 4-O-sulfate + adenosine 3',5'-bisphosphate + H(+). It carries out the reaction 3,3',5-triiodo-L-thyronine + 3'-phosphoadenylyl sulfate = 3,3',5-triiodo-L-thyronine sulfate + adenosine 3',5'-bisphosphate + H(+). It catalyses the reaction 3,3',5'-triiodo-L-thyronine + 3'-phosphoadenylyl sulfate = 3,3',5'-triiodo-L-thyronine sulfate + adenosine 3',5'-bisphosphate + H(+). The catalysed reaction is 3,3'-diiodo-L-thyronine + 3'-phosphoadenylyl sulfate = 3,3'-diiodo-L-thyronine sulfate + adenosine 3',5'-bisphosphate + H(+). The enzyme catalyses L-thyroxine + 3'-phosphoadenylyl sulfate = L-thyroxine sulfate + adenosine 3',5'-bisphosphate + H(+). Its function is as follows. Sulfotransferase that utilizes 3'-phospho-5'-adenylyl sulfate (PAPS) as sulfonate donor to catalyze the sulfate conjugation of a wide variety of acceptor molecules bearing a hydroxyl or an amine group. Sulfonation increases the water solubility of most compounds, and therefore their renal excretion, but it can also result in bioactivation to form active metabolites. Displays broad substrate specificity for small phenolic compounds. Plays an important role in the sulfonation of endogenous molecules such as steroid hormones. Mediates also the metabolic activation of carcinogenic N-hydroxyarylamines leading to highly reactive intermediates capable of forming DNA adducts, potentially resulting in mutagenesis. May play a role in gut microbiota-host metabolic interaction. O-sulfonates 4-ethylphenol (4-EP), a dietary tyrosine-derived metabolite produced by gut bacteria. The product 4-EPS crosses the blood-brain barrier and may negatively regulate oligodendrocyte maturation and myelination, affecting the functional connectivity of different brain regions associated with the limbic system. Catalyzes the sulfate conjugation of dopamine. Catalyzes the sulfation of T4 (L-thyroxine/3,5,3',5'-tetraiodothyronine), T3 (3,5,3'-triiodothyronine), rT3 (3,3',5'-triiodothyronine) and 3,3'-T2 (3,3'-diiodothyronine), with a substrate preference of 3,3'-T2 &gt; rT3 &gt; T3 &gt; T4. In Macaca fascicularis (Crab-eating macaque), this protein is Sulfotransferase 1A1 (SULT1A1).